A 114-amino-acid chain; its full sequence is uncharacterized protein (114 aa).

This is an uncharacterized protein from Human cytomegalovirus (strain AD169) (HHV-5).